A 238-amino-acid polypeptide reads, in one-letter code: MKAVLALATLIGSTLASSCSSTALSCSNSANSDTCCSPEYGLVVLNMQWAPGYGPDNAFTLHGLWPDKCSGAYAPSGGCDSNRASSSIASVIKSKDSSLYNSMLTYWPSNQGNNNVFWSHEWSKHGTCVSTYDPDCYDNYEEGEDIVDYFQKAMDLRSQYNVYKAFSSNGITPGGTYTATEMQSAIESYFGAKAKIDCSSGTLSDVALYFYVRGRDTYVITDALSTGSCSGDVEYPTK.

Residues 1–16 (MKAVLALATLIGSTLA) form the signal peptide. Intrachain disulfides connect Cys19–Cys36, Cys26–Cys69, Cys35–Cys136, Cys79–Cys128, and Cys198–Cys229. Catalysis depends on residues His62, Glu121, and His125.

This sequence belongs to the RNase T2 family.

It catalyses the reaction a ribonucleotidyl-ribonucleotide-RNA + H2O = a 3'-end 3'-phospho-ribonucleotide-RNA + a 5'-end dephospho-ribonucleoside-RNA + H(+). Functionally, this is a base non-specific ribonuclease. The chain is Ribonuclease Rh from Rhizopus niveus.